A 335-amino-acid polypeptide reads, in one-letter code: NADH-ubiquinone oxidoreductase chain 2 (335 aa).

Helical transmembrane passes span 7–27 (PTMALAMSTLIMSTLMAVSSA), 28–48 (NWMFLWGAMELNLLSFIPIMM), 58–78 (GAVKYFLAQALGSALLLMSST), 81–101 (WMTFSMISNFMPLTLMAAIML), 110–130 (FWYPSVMASISWVSCLILSSW), 147–167 (NMNFMLSMAAMNALLGGVIGM), 174–194 (TIMAYSSIGHIGWMMSLAAVY), 200–220 (IMYFVVYCILITPLFMTMGYL), 240–260 (MALLMVLLSLGGLPPFTGFMP), 274–294 (IILLILIAGSIMNLFFYLNII), and 315–335 (SLKFVIPICTLSLGLSPFIML).

This sequence belongs to the complex I subunit 2 family.

It localises to the mitochondrion inner membrane. It carries out the reaction a ubiquinone + NADH + 5 H(+)(in) = a ubiquinol + NAD(+) + 4 H(+)(out). Functionally, core subunit of the mitochondrial membrane respiratory chain NADH dehydrogenase (Complex I) that is believed to belong to the minimal assembly required for catalysis. Complex I functions in the transfer of electrons from NADH to the respiratory chain. The immediate electron acceptor for the enzyme is believed to be ubiquinone. The chain is NADH-ubiquinone oxidoreductase chain 2 (ND2) from Lumbricus terrestris (Common earthworm).